A 156-amino-acid polypeptide reads, in one-letter code: Cyanate hydratase (156 aa).

Active-site residues include arginine 96, glutamate 99, and serine 122.

Belongs to the cyanase family. As to quaternary structure, homodecamer composed of five homodimers.

The enzyme catalyses cyanate + hydrogencarbonate + 3 H(+) = NH4(+) + 2 CO2. In terms of biological role, catalyzes the reaction of cyanate with bicarbonate to produce ammonia and carbon dioxide. This is Cyanate hydratase (cynS) from Escherichia coli O157:H7.